Reading from the N-terminus, the 147-residue chain is Hemoglobin subunit beta (147 aa).

The Globin domain occupies 3-147 (HWTPEEKQYI…VAHALALGYH (145 aa)). The heme b site is built by H64 and H93.

It belongs to the globin family. Heterotetramer of two alpha-D chains and two beta chains. In terms of tissue distribution, red blood cells.

Its function is as follows. Involved in oxygen transport from the lung to the various peripheral tissues. The sequence is that of Hemoglobin subunit beta (HBB) from Chelonoidis niger (Galapagos giant tortoise).